The chain runs to 546 residues: CTP synthase (546 aa).

Residues 1–265 (MTKYVFVTGG…DEIVCHKLGI (265 aa)) form an amidoligase domain region. Residue Ser-13 participates in CTP binding. Residue Ser-13 participates in UTP binding. Residues 14–19 (SLGKGI) and Asp-71 contribute to the ATP site. Mg(2+) contacts are provided by Asp-71 and Glu-139. CTP-binding positions include 146 to 148 (DIE), 186 to 191 (KTKPTQ), and Lys-222. Residues 186-191 (KTKPTQ) and Lys-222 contribute to the UTP site. The Glutamine amidotransferase type-1 domain maps to 290–543 (DIAFVGKYVD…VKAAIARHSA (254 aa)). Gly-351 contacts L-glutamine. Cys-378 serves as the catalytic Nucleophile; for glutamine hydrolysis. Residues 379–382 (LGMQ), Glu-402, and Arg-469 contribute to the L-glutamine site. Active-site residues include His-516 and Glu-518.

This sequence belongs to the CTP synthase family. Homotetramer.

It catalyses the reaction UTP + L-glutamine + ATP + H2O = CTP + L-glutamate + ADP + phosphate + 2 H(+). The catalysed reaction is L-glutamine + H2O = L-glutamate + NH4(+). It carries out the reaction UTP + NH4(+) + ATP = CTP + ADP + phosphate + 2 H(+). It functions in the pathway pyrimidine metabolism; CTP biosynthesis via de novo pathway; CTP from UDP: step 2/2. Allosterically activated by GTP, when glutamine is the substrate; GTP has no effect on the reaction when ammonia is the substrate. The allosteric effector GTP functions by stabilizing the protein conformation that binds the tetrahedral intermediate(s) formed during glutamine hydrolysis. Inhibited by the product CTP, via allosteric rather than competitive inhibition. Its function is as follows. Catalyzes the ATP-dependent amination of UTP to CTP with either L-glutamine or ammonia as the source of nitrogen. Regulates intracellular CTP levels through interactions with the four ribonucleotide triphosphates. The polypeptide is CTP synthase (Azoarcus sp. (strain BH72)).